Here is a 164-residue protein sequence, read N- to C-terminus: Proline-rich protein 2 (164 aa).

The N-terminal stretch at 1–21 (MNLKVGIAVLIIALIVPSAQP) is a signal peptide.

Component of the acid-soluble organic matrix of calcified layers of the shell (at protein level).

The protein resides in the secreted. The polypeptide is Proline-rich protein 2 (Lottia gigantea (Giant owl limpet)).